A 3901-amino-acid chain; its full sequence is Nonribosomal peptide synthetase opaA (3901 aa).

The tract at residues 248 to 641 (HNAQHHPSVV…HRKDNQIKIR (394 aa)) is adenylation 1. Residues 780 to 854 (LPVTANEIVV…DMATRLTRIK (75 aa)) enclose the Carrier 1 domain. Ser-815 is subject to O-(pantetheine 4'-phosphoryl)serine. The segment at 891–1164 (DAYPCSALQE…IATVPIRINL (274 aa)) is condensation 1. The segment at 1328 to 1725 (QSHAQKTPKS…GRIGNQVKLR (398 aa)) is adenylation 2. Residues 1858-1936 (RTPLDTERDL…QIAAQAATRA (79 aa)) enclose the Carrier 2 domain. An O-(pantetheine 4'-phosphoryl)serine modification is found at Ser-1895. The tract at residues 1953–2261 (KLTPIQQLFF…KDARRRLTRN (309 aa)) is epimerase. Positions 2403-2826 (ENLYPCAPIQ…LVSTDHKRLL (424 aa)) are condensation 2. An adenylation 3 region spans residues 2846 to 3243 (QQHVRETPDA…GRKDSQIKIR (398 aa)). The Carrier 3 domain occupies 3375-3451 (LPSTAGEQLL…ALAARSRSKD (77 aa)). Ser-3412 carries the O-(pantetheine 4'-phosphoryl)serine modification. The tract at residues 3509-3837 (HHFSFAVEGK…EDLKTHFTLN (329 aa)) is condensation 3.

This sequence belongs to the NRP synthetase family.

Functionally, nonribosomal peptide synthetase; part of the gene cluster that mediates the biosynthesis of oxepinamides, derivatives of anthranilyl-containing tripeptides that share an oxepin ring and a fused pyrimidinone moiety. The nonribosomal peptide synthetase (NRPS) opaA assembles the quinazolinone core with D-Phe incorporation. The first adenylation domain (A1) of opaA loads and activates anthranilic acid whereas the second A domain (A2) is for activating of L-Phe, which is then converted to D-form by the E domain. The third A domain (A3) is responsible for L-Ile activation and the terminal condensation domain C3 for cyclization and releasing the NRPS product protuboxepin K. The cytochrome P450 monooxygenase opaB then catalyzes alone the oxepin ring formation to convert protuboxepin K into protuboxepin A. The flavoenzyme opaC installs subsequently one hydroxyl group at the oxepin ring, accompanied by double bond migration, to form 15-epi-oxepinamide E. The epimerase opaE changes the D-Phe residue back to L-form, leading to oxepinamide E, which is further methylated at the hydroxyl group at C-12 by the O-methyltransferase OpaF to yield oxepinamide F. The chain is Nonribosomal peptide synthetase opaA from Aspergillus ustus.